The primary structure comprises 87 residues: Defensin-like protein 218 (87 aa).

Positions 1 to 19 are cleaved as a signal peptide; that stretch reads MKTIVCFLTILILVSSCES. Disulfide bonds link cysteine 51-cysteine 70, cysteine 54-cysteine 75, and cysteine 58-cysteine 77.

This sequence belongs to the DEFL family.

It is found in the secreted. The polypeptide is Defensin-like protein 218 (Arabidopsis thaliana (Mouse-ear cress)).